We begin with the raw amino-acid sequence, 317 residues long: Heme A synthase (317 aa).

The Cytoplasmic segment spans residues 1-6; the sequence is MQRSLK. The chain crosses the membrane as a helical span at residues 7–27; that stretch reads WFASATTLAMLFVLIGGALVT. At 28–62 the chain is on the extracellular side; the sequence is KTGSGMGCGRSWPLCNGQWVPDHITPELIIELSHR. A disulfide bond links Cys35 and Cys42. Glu58 is a catalytic residue. Residue His61 participates in heme o binding. A helical membrane pass occupies residues 63 to 83; the sequence is LVSGLAGIMVLILSIWAWRAI. Topologically, residues 84–90 are cytoplasmic; sequence GHVQETK. A helical membrane pass occupies residues 91–111; that stretch reads FLAVISFVFLVLQGLIGAAAV. Residues 112–121 lie on the Extracellular side of the membrane; sequence VWGQSDFVLA. Residues 122–142 form a helical membrane-spanning segment; it reads LHFGISLISFAAVLLLTLLIF. A heme o-binding site is contributed by His123. Residues 143-159 lie on the Cytoplasmic side of the membrane; sequence EIDKTFSAASLSLDGKM. Residues 160–180 traverse the membrane as a helical segment; sequence RFHIYGITIYSYIVVYTGALV. Over 181-211 the chain is Extracellular; it reads RHTNASLACPSWPLCAKTRLLPVQFHEWVQM. A disulfide bridge connects residues Cys189 and Cys195. The helical transmembrane segment at 212–232 threads the bilayer; it reads GHRLAAAVIIIWIAAAAIHAV. A heme b-binding site is contributed by His213. Residues 233 to 243 are Cytoplasmic-facing; the sequence is RHYRRQPVIYY. Residues 244–264 traverse the membrane as a helical segment; the sequence is GWLIALLLVLAQMTTGALVVF. Residues 265 to 270 lie on the Extracellular side of the membrane; that stretch reads TQLNLY. Residues 271–291 traverse the membrane as a helical segment; that stretch reads IALAHAFFISCLFGVLSYLLL. His275 is a heme b binding site. Residues 292–317 are Cytoplasmic-facing; it reads LALRTRRAPVKAADHSAGEAAPATLK.

The protein belongs to the COX15/CtaA family. Type 1 subfamily. Interacts with CtaB. The cofactor is heme b.

It is found in the cell membrane. The catalysed reaction is Fe(II)-heme o + 2 A + H2O = Fe(II)-heme a + 2 AH2. The protein operates within porphyrin-containing compound metabolism; heme A biosynthesis; heme A from heme O: step 1/1. Its function is as follows. Catalyzes the conversion of heme O to heme A by two successive hydroxylations of the methyl group at C8. The first hydroxylation forms heme I, the second hydroxylation results in an unstable dihydroxymethyl group, which spontaneously dehydrates, resulting in the formyl group of heme A. This is Heme A synthase from Geobacillus kaustophilus (strain HTA426).